A 358-amino-acid polypeptide reads, in one-letter code: Protein phosphatase 1 regulatory subunit 3G (358 aa).

Positions 1–71 (MEPIGARLSL…KEEAAPQEQE (71 aa)) are disordered. Positions 11-29 (EAPGPAPFREAPPAEELPA) are enriched in low complexity. At S86 the chain carries Phosphoserine. One can recognise a CBM21 domain in the interval 210–350 (AERLQRQRVC…NNAGANYTLR (141 aa)). Residues 270–280 (EPLEPQQPEAP) are compositionally biased toward low complexity. The disordered stretch occupies residues 270–295 (EPLEPQQPEAPSGASEPGSGDAKKEP).

In terms of biological role, glycogen-targeting subunit for protein phosphatase 1 (PP1). Involved in the regulation of hepatic glycogenesis in a manner coupled to the fasting-feeding cycle and distinct from other glycogen-targeting subunits. The polypeptide is Protein phosphatase 1 regulatory subunit 3G (PPP1R3G) (Homo sapiens (Human)).